The sequence spans 311 residues: ATP synthase subunit a (311 aa).

Transmembrane regions (helical) follow at residues 62–82 (AVHVDTLGWGIFLALLLGFIF), 123–143 (IAPMGLTIFSWVFMMNLMDLI), 170–190 (DPNATLGMAFTVFALMIMFSI), 213–233 (LWYLNILLIPVNTILETVALI), 253–273 (IFILIALLFSVGLVMGFVGGV), and 276–296 (WAWAVFHILVITLQAFIFMVL).

Belongs to the ATPase A chain family. F-type ATPases have 2 components, CF(1) - the catalytic core - and CF(0) - the membrane proton channel. CF(1) has five subunits: alpha(3), beta(3), gamma(1), delta(1), epsilon(1). CF(0) has three main subunits: a(1), b(2) and c(9-12). The alpha and beta chains form an alternating ring which encloses part of the gamma chain. CF(1) is attached to CF(0) by a central stalk formed by the gamma and epsilon chains, while a peripheral stalk is formed by the delta and b chains.

The protein resides in the cell inner membrane. Its function is as follows. Key component of the proton channel; it plays a direct role in the translocation of protons across the membrane. The sequence is that of ATP synthase subunit a from Saccharophagus degradans (strain 2-40 / ATCC 43961 / DSM 17024).